The following is a 496-amino-acid chain: DNA-directed DNA/RNA polymerase mu (496 aa).

Residues 1–22 (MLPKRRRVRAGSPHSAVASSTP) are disordered. S12 is subject to Phosphoserine. Residues 12–22 (SPHSAVASSTP) show a composition bias toward low complexity. The region spanning 23 to 122 (PSVVRFPDVA…QPVPEEGRHH (100 aa)) is the BRCT domain. 2 residues coordinate Na(+): T241 and V243. The tract at residues 323–332 (RGKLQGHDVD) is involved in ssDNA binding. Residues D330, D332, and D420 each contribute to the Mg(2+) site.

It belongs to the DNA polymerase type-X family. Mg(2+) is required as a cofactor.

It is found in the nucleus. It catalyses the reaction DNA(n) + a 2'-deoxyribonucleoside 5'-triphosphate = DNA(n+1) + diphosphate. Functionally, gap-filling polymerase involved in repair of DNA double-strand breaks by non-homologous end joining (NHEJ). Participates in immunoglobulin (Ig) light chain gene rearrangement in V(D)J recombination. This chain is DNA-directed DNA/RNA polymerase mu (Polm), found in Mus musculus (Mouse).